Reading from the N-terminus, the 213-residue chain is Protein-L-isoaspartate O-methyltransferase (213 aa).

Residue Ser61 is part of the active site.

It belongs to the methyltransferase superfamily. L-isoaspartyl/D-aspartyl protein methyltransferase family.

Its subcellular location is the cytoplasm. The enzyme catalyses [protein]-L-isoaspartate + S-adenosyl-L-methionine = [protein]-L-isoaspartate alpha-methyl ester + S-adenosyl-L-homocysteine. In terms of biological role, catalyzes the methyl esterification of L-isoaspartyl residues in peptides and proteins that result from spontaneous decomposition of normal L-aspartyl and L-asparaginyl residues. It plays a role in the repair and/or degradation of damaged proteins. In Petrotoga mobilis (strain DSM 10674 / SJ95), this protein is Protein-L-isoaspartate O-methyltransferase.